The primary structure comprises 530 residues: B3 domain-containing protein REM-like 3 (530 aa).

2 consecutive DNA-binding regions (TF-B3) follow at residues 11 to 103 (KPHF…FGLS) and 144 to 241 (DFVV…FPLE). Residues 251–276 (SKKVKQEVEHEESVKEETNVESGKLK) are disordered. A compositionally biased stretch (basic and acidic residues) spans 254–276 (VKQEVEHEESVKEETNVESGKLK). DNA-binding regions (TF-B3) lie at residues 296-393 (NFVV…FPLE) and 431-530 (SFVV…WDKK).

The protein resides in the nucleus. The protein is B3 domain-containing protein REM-like 3 of Arabidopsis thaliana (Mouse-ear cress).